We begin with the raw amino-acid sequence, 150 residues long: uncharacterized protein (150 aa).

This is an uncharacterized protein from Escherichia coli O157:H7.